The sequence spans 301 residues: NADH-ubiquinone oxidoreductase chain 1 (301 aa).

8 helical membrane-spanning segments follow: residues 4–24, 62–82, 96–116, 140–160, 165–185, 216–236, 247–267, and 279–299; these read IIPI…VLGY, LALF…MWIP, ILFM…SGWA, LAII…STLI, YTWL…STIA, LFFL…IILF, EMYT…FLWI, and LMHL…MWHV.

Belongs to the complex I subunit 1 family.

It localises to the mitochondrion inner membrane. The enzyme catalyses a ubiquinone + NADH + 5 H(+)(in) = a ubiquinol + NAD(+) + 4 H(+)(out). In terms of biological role, core subunit of the mitochondrial membrane respiratory chain NADH dehydrogenase (Complex I) that is believed to belong to the minimal assembly required for catalysis. Complex I functions in the transfer of electrons from NADH to the respiratory chain. The immediate electron acceptor for the enzyme is believed to be ubiquinone. The polypeptide is NADH-ubiquinone oxidoreductase chain 1 (MT-ND1) (Nyctalus noctula (Noctule bat)).